We begin with the raw amino-acid sequence, 362 residues long: 4-hydroxythreonine-4-phosphate dehydrogenase (362 aa).

Thr149 serves as a coordination point for substrate. Residues His184, His229, and His295 each contribute to the a divalent metal cation site. Lys303, Asn312, and Arg321 together coordinate substrate.

The protein belongs to the PdxA family. Homodimer. A divalent metal cation serves as cofactor.

It localises to the cytoplasm. The enzyme catalyses 4-(phosphooxy)-L-threonine + NAD(+) = 3-amino-2-oxopropyl phosphate + CO2 + NADH. It functions in the pathway cofactor biosynthesis; pyridoxine 5'-phosphate biosynthesis; pyridoxine 5'-phosphate from D-erythrose 4-phosphate: step 4/5. In terms of biological role, catalyzes the NAD(P)-dependent oxidation of 4-(phosphooxy)-L-threonine (HTP) into 2-amino-3-oxo-4-(phosphooxy)butyric acid which spontaneously decarboxylates to form 3-amino-2-oxopropyl phosphate (AHAP). In Nostoc sp. (strain PCC 7120 / SAG 25.82 / UTEX 2576), this protein is 4-hydroxythreonine-4-phosphate dehydrogenase.